The sequence spans 393 residues: Protein TsgA (393 aa).

A run of 12 helical transmembrane segments spans residues 11–31 (WISF…GMVM), 51–71 (FLNA…EIVP), 78–98 (FGFI…SLAL), 101–121 (AAMF…TFLI), 134–154 (LLFT…VAAF), 162–182 (WYWV…LTFG), 206–226 (IGVL…LGFI), 245–265 (ALVS…SFIL), 273–293 (ILTV…TGTQ), 298–318 (WFIL…ITLG), 332–352 (FILT…GPIV), and 361–381 (LLTA…LGFV).

Belongs to the major facilitator superfamily. TsgA family.

It localises to the cell inner membrane. The protein is Protein TsgA of Salmonella dublin (strain CT_02021853).